We begin with the raw amino-acid sequence, 223 residues long: Agamous-like MADS-box protein AGL11 (223 aa).

One can recognise an MADS-box domain in the interval 1–61 (MGRGKIEIKR…GRVYEYSNNN (61 aa)). One can recognise a K-box domain in the interval 87–177 (AQYYQQESAK…RTKIAEVERL (91 aa)).

In terms of tissue distribution, expressed in flowers and seeds. Expressed in endotesta cell layer of developing seeds.

The protein localises to the nucleus. Probable transcription factor involved in seed development. Plays a role in seed morphogenesis by promoting the correct development of endotesta cell layer, which directs the further development of the seed coat, the endosperm, and consequently the embryo. This chain is Agamous-like MADS-box protein AGL11, found in Vitis vinifera (Grape).